The following is a 147-amino-acid chain: Spermidine export protein MdtJ (147 aa).

4 helical membrane passes run 1-21, 31-51, 54-74, and 81-101; these read MIYW…TLSM, TGHV…SLAV, VALG…ITIF, and ETLS…ILLV. The span at 105–117 shows a compositional bias: basic residues; sequence TRKPKQPNRHRGN. The segment at 105–147 is disordered; sequence TRKPKQPNRHRGNRPPSVQGLKTQTTGHHKGVAVESGEHHAAA.

It belongs to the drug/metabolite transporter (DMT) superfamily. Small multidrug resistance (SMR) (TC 2.A.7.1) family. MdtJ subfamily. As to quaternary structure, forms a complex with MdtI.

Its subcellular location is the cell inner membrane. Its function is as follows. Catalyzes the excretion of spermidine. The chain is Spermidine export protein MdtJ from Yersinia pseudotuberculosis serotype IB (strain PB1/+).